Here is a 125-residue protein sequence, read N- to C-terminus: Steroid Delta-isomerase (125 aa).

Tyr-14 (proton donor) is an active-site residue. Catalysis depends on Asp-38, which acts as the Proton acceptor. Position 99 (Asp-99) interacts with substrate.

Homodimer.

It carries out the reaction a 3-oxo-Delta(5)-steroid = a 3-oxo-Delta(4)-steroid. The sequence is that of Steroid Delta-isomerase (ksi) from Comamonas testosteroni (Pseudomonas testosteroni).